The sequence spans 307 residues: Ribosomal RNA small subunit methyltransferase H (307 aa).

S-adenosyl-L-methionine is bound by residues 33 to 35, Asp-51, Phe-82, Asp-96, and Gln-103; that span reads GGY.

It belongs to the methyltransferase superfamily. RsmH family.

Its subcellular location is the cytoplasm. The enzyme catalyses cytidine(1402) in 16S rRNA + S-adenosyl-L-methionine = N(4)-methylcytidine(1402) in 16S rRNA + S-adenosyl-L-homocysteine + H(+). In terms of biological role, specifically methylates the N4 position of cytidine in position 1402 (C1402) of 16S rRNA. The sequence is that of Ribosomal RNA small subunit methyltransferase H from Rickettsia peacockii (strain Rustic).